We begin with the raw amino-acid sequence, 453 residues long: MSDVSTQSPKVGFVSLGCPKALVDSEQIITQLRAEGYEISGTYGGADLVVVNTCGFIDEAVQESLDAIGEALAENGKVIVTGCLGAKKDAAGQDIITSVHPKVLAVTGPHALGEVMEAVHTHLPKPHDPFIDLVPPQGIKLTPKHYAYLKISEGCNHRCSFCIIPSMRGDLVSRPVAEVMLEAENLLKAGVKELLVISQDTSAYGVDVKFRTGFWNGRPLKTRMTELVGALGELAAQYGAWVRLHYVYPYPSVDEVMPLMAEGKVLPYLDVPLQHAHPEVLKRMKRPANAEKTLDRIRAWREVCPELTIRSTFIAGFPGETEEEFQTLLDFIAEAELDRVGCFAYSPVEGATANDLPGALPDEVREERRARFMEVAERVSARRLQRKVGKTLRVLVDEVNQDGGIGRSSADAPEIDGLVYIAPPSKPYKRYKAGDFVSVKITGADGHDLWGEV.

Residues 9 to 124 (PKVGFVSLGC…VMEAVHTHLP (116 aa)) form the MTTase N-terminal domain. Residues cysteine 18, cysteine 54, cysteine 83, cysteine 155, cysteine 159, and cysteine 162 each contribute to the [4Fe-4S] cluster site. Residues 141-382 (LTPKHYAYLK…MEVAERVSAR (242 aa)) enclose the Radical SAM core domain. Positions 385–453 (QRKVGKTLRV…ADGHDLWGEV (69 aa)) constitute a TRAM domain.

The protein belongs to the methylthiotransferase family. RimO subfamily. [4Fe-4S] cluster is required as a cofactor.

Its subcellular location is the cytoplasm. It catalyses the reaction L-aspartate(89)-[ribosomal protein uS12]-hydrogen + (sulfur carrier)-SH + AH2 + 2 S-adenosyl-L-methionine = 3-methylsulfanyl-L-aspartate(89)-[ribosomal protein uS12]-hydrogen + (sulfur carrier)-H + 5'-deoxyadenosine + L-methionine + A + S-adenosyl-L-homocysteine + 2 H(+). In terms of biological role, catalyzes the methylthiolation of an aspartic acid residue of ribosomal protein uS12. This chain is Ribosomal protein uS12 methylthiotransferase RimO, found in Ralstonia nicotianae (strain ATCC BAA-1114 / GMI1000) (Ralstonia solanacearum).